The chain runs to 331 residues: tRNA-modifying protein YgfZ (331 aa).

Positions 28 and 191 each coordinate folate.

The protein belongs to the tRNA-modifying YgfZ family.

The protein resides in the cytoplasm. In terms of biological role, folate-binding protein involved in regulating the level of ATP-DnaA and in the modification of some tRNAs. It is probably a key factor in regulatory networks that act via tRNA modification, such as initiation of chromosomal replication. The protein is tRNA-modifying protein YgfZ of Edwardsiella ictaluri (strain 93-146).